A 281-amino-acid chain; its full sequence is Pantothenate synthetase (281 aa).

30 to 37 contacts ATP; it reads MGNLHQGH. H37 (proton donor) is an active-site residue. Q61 contacts (R)-pantoate. Q61 is a beta-alanine binding site. An ATP-binding site is contributed by 148 to 151; the sequence is GQKD. Position 154 (Q154) interacts with (R)-pantoate. ATP contacts are provided by residues A177 and 185 to 188; that span reads LSSR.

This sequence belongs to the pantothenate synthetase family. In terms of assembly, homodimer.

Its subcellular location is the cytoplasm. The catalysed reaction is (R)-pantoate + beta-alanine + ATP = (R)-pantothenate + AMP + diphosphate + H(+). The protein operates within cofactor biosynthesis; (R)-pantothenate biosynthesis; (R)-pantothenate from (R)-pantoate and beta-alanine: step 1/1. In terms of biological role, catalyzes the condensation of pantoate with beta-alanine in an ATP-dependent reaction via a pantoyl-adenylate intermediate. This is Pantothenate synthetase from Acinetobacter baylyi (strain ATCC 33305 / BD413 / ADP1).